We begin with the raw amino-acid sequence, 254 residues long: 3-deoxy-manno-octulosonate cytidylyltransferase (254 aa).

The protein belongs to the KdsB family.

The protein resides in the cytoplasm. The catalysed reaction is 3-deoxy-alpha-D-manno-oct-2-ulosonate + CTP = CMP-3-deoxy-beta-D-manno-octulosonate + diphosphate. It participates in nucleotide-sugar biosynthesis; CMP-3-deoxy-D-manno-octulosonate biosynthesis; CMP-3-deoxy-D-manno-octulosonate from 3-deoxy-D-manno-octulosonate and CTP: step 1/1. It functions in the pathway bacterial outer membrane biogenesis; lipopolysaccharide biosynthesis. Functionally, activates KDO (a required 8-carbon sugar) for incorporation into bacterial lipopolysaccharide in Gram-negative bacteria. This is 3-deoxy-manno-octulosonate cytidylyltransferase from Pseudomonas aeruginosa (strain LESB58).